We begin with the raw amino-acid sequence, 377 residues long: Carboxynorspermidine/carboxyspermidine decarboxylase (377 aa).

Lys-41 is subject to N6-(pyridoxal phosphate)lysine. Glu-238 and Asp-274 together coordinate substrate.

This sequence belongs to the Orn/Lys/Arg decarboxylase class-II family. NspC subfamily. In terms of assembly, homodimer. The cofactor is pyridoxal 5'-phosphate.

The protein localises to the cytoplasm. The enzyme catalyses carboxynorspermidine + H(+) = norspermidine + CO2. It carries out the reaction carboxyspermidine + H(+) = spermidine + CO2. Functionally, catalyzes the decarboxylation of carboxynorspermidine and carboxyspermidine. Carboxynorspermidine is decarboxylated 20-fold more efficiently than carboxyspermidine. Exhibits some activity with L-ornithine, but shows no activity with L-arginine, L-lysine or meso-diaminopimelate. The chain is Carboxynorspermidine/carboxyspermidine decarboxylase from Vibrio vulnificus (strain CMCP6).